Here is a 425-residue protein sequence, read N- to C-terminus: Pectate lyase L (425 aa).

A signal peptide spans 1-25 (MKYLNCFISTGLAAFFLVNSTSVLA). Cysteine 28 and cysteine 114 are joined by a disulfide. Ca(2+)-binding residues include aspartate 209, aspartate 233, aspartate 234, and aspartate 237. Lysine 273 (proton acceptor) is an active-site residue. Residues asparagine 402, serine 413, alanine 416, aspartate 418, and glutamate 423 each coordinate Ca(2+).

The protein belongs to the polysaccharide lyase 9 family. It depends on Ca(2+) as a cofactor.

Its subcellular location is the secreted. The catalysed reaction is Eliminative cleavage of (1-&gt;4)-alpha-D-galacturonan to give oligosaccharides with 4-deoxy-alpha-D-galact-4-enuronosyl groups at their non-reducing ends.. It participates in glycan metabolism; pectin degradation; 2-dehydro-3-deoxy-D-gluconate from pectin: step 2/5. Its function is as follows. Presents an endo-cleaving activity on polygalacturonate or partially methylated pectin. The chain is Pectate lyase L (pelL) from Dickeya chrysanthemi (Pectobacterium chrysanthemi).